Consider the following 356-residue polypeptide: UDP-N-acetylglucosamine--N-acetylmuramyl-(pentapeptide) pyrophosphoryl-undecaprenol N-acetylglucosamine transferase (356 aa).

Residues 15–17, asparagine 127, arginine 163, serine 191, isoleucine 244, 263–268, and glutamine 288 each bind UDP-N-acetyl-alpha-D-glucosamine; these read TGG and ALTVSE.

This sequence belongs to the glycosyltransferase 28 family. MurG subfamily.

It is found in the cell inner membrane. The enzyme catalyses di-trans,octa-cis-undecaprenyl diphospho-N-acetyl-alpha-D-muramoyl-L-alanyl-D-glutamyl-meso-2,6-diaminopimeloyl-D-alanyl-D-alanine + UDP-N-acetyl-alpha-D-glucosamine = di-trans,octa-cis-undecaprenyl diphospho-[N-acetyl-alpha-D-glucosaminyl-(1-&gt;4)]-N-acetyl-alpha-D-muramoyl-L-alanyl-D-glutamyl-meso-2,6-diaminopimeloyl-D-alanyl-D-alanine + UDP + H(+). Its pathway is cell wall biogenesis; peptidoglycan biosynthesis. Functionally, cell wall formation. Catalyzes the transfer of a GlcNAc subunit on undecaprenyl-pyrophosphoryl-MurNAc-pentapeptide (lipid intermediate I) to form undecaprenyl-pyrophosphoryl-MurNAc-(pentapeptide)GlcNAc (lipid intermediate II). This chain is UDP-N-acetylglucosamine--N-acetylmuramyl-(pentapeptide) pyrophosphoryl-undecaprenol N-acetylglucosamine transferase, found in Yersinia pestis (strain Pestoides F).